The sequence spans 347 residues: MRALGAVVTLLLWGQLFAVELGNDATDIEDDSCPKPPEIANGYVEHLVRYRCRQFYKLQTEGDGIYTLNSEKQWVNPAAGDKLPKCEAVCGKPKHPVDQVQRIIGGSMDAKGSFPWQAKMISRHGLTTGATLISDQWLLTTAQNLFLNHSENATAKDIAPTLTLYVGKNQLVEIEKVVLHPERSVVDIGLIKLKQKVLVTEKVMPICLPSKDYVAPGRMGYVSGWGRNVNFRFTERLKYVMLPVADQEKCELHYEKSTVPEKKGAVSPVGVQPILNKHTFCAGLTKYEEDTCYGDAGSAFAVHDTEEDTWYAAGILSFDKSCAVAEYGVYVRATDLKDWVQETMAKN.

An N-terminal signal peptide occupies residues 1 to 18 (MRALGAVVTLLLWGQLFA). The Sushi domain occupies 31–88 (DSCPKPPEIANGYVEHLVRYRCRQFYKLQTEGDGIYTLNSEKQWVNPAAGDKLPKCEA). Disulfide bonds link Cys52–Cys86, Cys90–Cys207, Cys250–Cys281, and Cys292–Cys322. Residues 103 to 345 (IIGGSMDAKG…LKDWVQETMA (243 aa)) enclose the Peptidase S1 domain. 2 N-linked (GlcNAc...) asparagine glycosylation sites follow: Asn148 and Asn152. The segment at 259–264 (VPEKKG) is interaction with CD163.

It belongs to the peptidase S1 family. In terms of assembly, tetramer of two alpha and two beta chains; disulfide-linked. The hemoglobin/haptoglobin complex is composed of a haptoglobin dimer bound to two hemoglobin alpha-beta dimers. Interacts with CD163. Interacts with ERGIC3. As to expression, expressed by the liver and secreted in plasma.

It localises to the secreted. In terms of biological role, as a result of hemolysis, hemoglobin is found to accumulate in the kidney and is secreted in the urine. Haptoglobin captures, and combines with free plasma hemoglobin to allow hepatic recycling of heme iron and to prevent kidney damage. Haptoglobin also acts as an antioxidant, has antibacterial activity and plays a role in modulating many aspects of the acute phase response. Hemoglobin/haptoglobin complexes are rapidly cleared by the macrophage CD163 scavenger receptor expressed on the surface of liver Kupfer cells through an endocytic lysosomal degradation pathway. This Rattus norvegicus (Rat) protein is Haptoglobin (Hp).